Consider the following 325-residue polypeptide: Lipid droplet-associated hydrolase (325 aa).

Ser-139 serves as the catalytic Nucleophile. Active-site charge relay system residues include Asp-271 and His-300.

It belongs to the AB hydrolase superfamily. LDAH family.

Its subcellular location is the lipid droplet. The protein localises to the endoplasmic reticulum. The catalysed reaction is a cholesterol ester + H2O = cholesterol + a fatty acid + H(+). Its function is as follows. Probable serine lipid hydrolase associated with lipid droplets. Has low cholesterol esterase activity. Appears to lack triglyceride lipase activity. Involved in cholesterol and triglyceride homeostasis; stimulates cellular triglyceride accumulation and cellular cholesterol release. Acts antagonistically with PNPLA2/ATGL in regulation of cellular lipid stores. May regulate triglyceride accumulation indirectly through stimulation of PNPLA2/ATGL ubiquitination and proteasomal degradation. Promotes microtubule-dependent lipid droplet fusion. Highly expressed in macrophage-rich areas in atherosclerotic lesions, suggesting that it could promote cholesterol ester turnover in macrophages. The protein is Lipid droplet-associated hydrolase of Pongo abelii (Sumatran orangutan).